We begin with the raw amino-acid sequence, 269 residues long: Glutamate racemase (269 aa).

Residues 14–15 (DS) and 46–47 (YS) each bind substrate. Cysteine 78 serves as the catalytic Proton donor/acceptor. Residue 79–80 (NT) coordinates substrate. Cysteine 189 (proton donor/acceptor) is an active-site residue. 190 to 191 (TH) is a binding site for substrate.

This sequence belongs to the aspartate/glutamate racemases family.

It carries out the reaction L-glutamate = D-glutamate. It participates in cell wall biogenesis; peptidoglycan biosynthesis. Functionally, provides the (R)-glutamate required for cell wall biosynthesis. The polypeptide is Glutamate racemase (Haemophilus influenzae (strain PittGG)).